We begin with the raw amino-acid sequence, 627 residues long: Bromodomain adjacent to zinc finger domain protein 1A (627 aa).

The PHD-type zinc-finger motif lies at Asn-222 to Lys-272. The tract at residues His-270 to Gly-503 is disordered. Positions Lys-272–Arg-283 are enriched in basic residues. Positions Arg-281–Ser-327 form a coiled coil. Over residues Asp-287 to Glu-326 the composition is skewed to acidic residues. A compositionally biased stretch (low complexity) spans Thr-348–Lys-359. Polar residues-rich tracts occupy residues Glu-386–Asp-395 and Ser-402–Thr-412. Positions Gly-417–Leu-431 are enriched in basic residues. The span at Asp-486–Arg-496 shows a compositional bias: polar residues. Residues His-502–Leu-605 form the Bromo domain.

Belongs to the WAL family. As to quaternary structure, together with p18 and p20 proteins, it forms the Xenopus version of CHRAC. Phosphorylated in mitosis.

It localises to the nucleus. In terms of biological role, regulatory subunit of a chromatin remodeling complex, which forms ordered nucleosome arrays on chromatin and slides edge- and center-positioned histone octamers away from their original location on the DNA template to facilitate access to DNA during DNA-templated processes such as DNA replication, transcription, and repair. Involved in regulating the spacing of nucleosomes along the chromatin and have the ability to slide mononucleosomes to the center of a DNA template in an ATP-dependent manner. May play a role in transcriptional regulation. The polypeptide is Bromodomain adjacent to zinc finger domain protein 1A (baz1a) (Xenopus laevis (African clawed frog)).